Here is a 200-residue protein sequence, read N- to C-terminus: MADESNKVAAEVRDSFGKGAARKIRAAGKIPAVIYGHGSEPVHITLPAHQVGLLLRKANAVLDIDIAGKTQLALVKDVQKDPVLQIIEHLDLLVVRRGEKVQVEVPVHVEGEPFSGTIAMLDIPTIKLEVEATNIPERIVIDVTGAEEGTQYHAKDFALPAGAVLAEDEDLLLLNIIVPAAARAEDEEAVVEAAGDQAAE.

It belongs to the bacterial ribosomal protein bL25 family. CTC subfamily. In terms of assembly, part of the 50S ribosomal subunit; part of the 5S rRNA/L5/L18/L25 subcomplex. Contacts the 5S rRNA. Binds to the 5S rRNA independently of L5 and L18.

This is one of the proteins that binds to the 5S RNA in the ribosome where it forms part of the central protuberance. This chain is Large ribosomal subunit protein bL25, found in Leifsonia xyli subsp. xyli (strain CTCB07).